Here is a 648-residue protein sequence, read N- to C-terminus: Rab11 family-interacting protein 1 (648 aa).

The region spanning 1 to 129 (MSLAASAGRG…DQSRRKKQWY (129 aa)) is the C2 domain. Positions 164 to 188 (SMKDKSRNPFGKLKDKIKGKNKDNT) are enriched in basic and acidic residues. Disordered regions lie at residues 164-470 (SMKD…GRKG), 483-503 (VRRPEKDAVPVASQWGSSQNP), and 516-555 (VESKCEPKPPVPVPRTPQTRAVKPRPHPVKPMNTTAPKIT). Positions 189 to 201 (SDTASAIVPSTTP) are enriched in polar residues. 3 positions are modified to phosphoserine: S205, S209, and S237. Composition is skewed to polar residues over residues 227–242 (PSLQKTPLSQSMSVLP) and 271–296 (SSASEVMSQKRTSSTDHTQPNQSNFS). 9 positions are modified to phosphoserine: S304, S319, S343, S345, S347, S349, S360, S361, and S386. Residues 314 to 323 (DSLSRSNVCI) show a composition bias toward polar residues. Basic and acidic residues-rich tracts occupy residues 381-394 (SDRRLSDSSTKDSM) and 422-436 (ATKETKDSKKQESKK). S438 is modified (phosphoserine). Over residues 445-454 (GKKDVAKGSE) the composition is skewed to basic and acidic residues. Positions 576–638 (KKYQPSDPAF…EETPNILRVP (63 aa)) constitute an FIP-RBD domain. The interval 584 to 648 (AFAYAQLTHD…AQTGKKAGKM (65 aa)) is necessary for interaction with RAB4A and RAB11A, subcellular location and endosomal recycling.

As to quaternary structure, homooligomer. Interacts with RAB11A, RAB11B, RAB25, RAB4A and RAB14.

The protein localises to the recycling endosome. Its subcellular location is the cytoplasmic vesicle. Functionally, a Rab11 effector protein involved in the endosomal recycling process. Also involved in controlling membrane trafficking along the phagocytic pathway and in phagocytosis. Interaction with RAB14 may function in the process of neurite formation. In Rattus norvegicus (Rat), this protein is Rab11 family-interacting protein 1.